The chain runs to 323 residues: Olfactory receptor 51S1 (323 aa).

The Extracellular segment spans residues 1–33 (MSTLPTQIAPNSSTSMAPTFLLVGMPGLSGAPS). A glycan (N-linked (GlcNAc...) asparagine) is linked at asparagine 11. The helical transmembrane segment at 34 to 54 (WWTLPLIAVYLLSALGNGTIL) threads the bilayer. Residues 55–62 (WIIALQPA) lie on the Cytoplasmic side of the membrane. A helical membrane pass occupies residues 63 to 83 (LHRPMHFFLFLLSVSDIGLVT). The Extracellular segment spans residues 84–107 (ALMPTLLGIALAGAHTVPASACLL). A disulfide bridge connects residues cysteine 105 and cysteine 197. Residues 108-128 (QMVFIHVFSVMESSVLLAMSI) form a helical membrane-spanning segment. Residues 129–147 (DRALAICRPLHYPALLTNG) are Cytoplasmic-facing. The helical transmembrane segment at 148–168 (VISKISLAISFRCLGLHLPLP) threads the bilayer. Over 169–203 (FLLAYMPYCLPQVLTHSYCLHPDVARLACPEAWGA) the chain is Extracellular. Residues 204–224 (AYSLFVVLSAMGLDPLLIFFS) form a helical membrane-spanning segment. Topologically, residues 225–244 (YGLIGKVLQGVESREDRWKA) are cytoplasmic. Residues 245 to 265 (GQTCAAHLSAVLLFYIPMILL) traverse the membrane as a helical segment. The Extracellular portion of the chain corresponds to 266–280 (ALINHPELPITQHTH). A helical membrane pass occupies residues 281 to 301 (TLLSYVHFLLPPLINPILYSV). Topologically, residues 302 to 323 (KMKEIRKRILNRLQPRKVGGAQ) are cytoplasmic.

This sequence belongs to the G-protein coupled receptor 1 family.

It is found in the cell membrane. Functionally, odorant receptor. The chain is Olfactory receptor 51S1 (OR51S1) from Homo sapiens (Human).